Here is a 581-residue protein sequence, read N- to C-terminus: MSAGEVERLVELSGGTGGDEEEEWLYGGPWDVHVHSDLAKDLDENEVERPEEENASANPPSGIEEEAAENGVAKPKVTETEDDSDSDSDDDEDDVHVTIGDIKTGAPQYGSYGTAPVNLNIKAGGRVYGNTGTKVKGVDLDAPGSINGVPLLEVDLDSFEDKPWRKPGADLSDYFNYGFNEDTWKAYCEKQKRIRMGLEVIPVTSTTNKITVQQGRTGNSEKEAALPSTKAEFTSPPSLFKTGLPPSRNSTSSQSQTSTASRKASSSVGKWQDRYGRAESPDLRRLPGAIDVIGQTITISRVEGRRRANENSNIQVLSDRSATEVDNNFSKPPPFFPPGAPPTHLPPPPFLPPPPTVSTAPPLIPPPGIPITVPPPGFPPPPGAPPPSLIPTIESGHSSGYDSRSARAFPYGNVAFPHLTSSAPSWPSLVDTTKQWDYYARREKDRDRDRERDRDRERERDRDRERERTRERERERDHSPTPSVFNSDEERYRYREYAERGYERHRASREKEERHRERRHREKEETRHKSSRSNSRRRHESEEGDSHRRHKHKKSKRSKEGKEAGSEPVPEQESTEAAPAE.

Basic and acidic residues-rich tracts occupy residues 1–10 and 32–42; these read MSAGEVERLV and VHVHSDLAKDL. 3 disordered regions span residues 1–95, 211–282, and 320–581; these read MSAG…EDDV, TVQQ…ESPD, and RSAT…APAE. A sufficient for interaction with PAPOLA region spans residues 1–110; it reads MSAGEVERLV…DIKTGAPQYG (110 aa). The segment at 1–332 is necessary for stimulating PAPOLA activity; the sequence is MSAGEVERLV…TEVDNNFSKP (332 aa). Acidic residues-rich tracts occupy residues 43–54 and 80–94; these read DENEVERPEEEN and TEDD…DEDD. Phosphoserine occurs at positions 84, 86, and 88. The interval 136–219 is sufficient for interaction with CPSF4; the sequence is KGVDLDAPGS…ITVQQGRTGN (84 aa). A compositionally biased stretch (low complexity) spans 247 to 267; sequence SRNSTSSQSQTSTASRKASSS. Over residues 271-282 the composition is skewed to basic and acidic residues; it reads WQDRYGRAESPD. Ser280 carries the post-translational modification Phosphoserine. The segment covering 320–330 has biased composition (polar residues); the sequence is RSATEVDNNFS. Over residues 331 to 389 the composition is skewed to pro residues; it reads KPPPFFPPGAPPTHLPPPPFLPPPPTVSTAPPLIPPPGIPITVPPPGFPPPPGAPPPSL. Tyr411 is subject to Phosphotyrosine. Positions 419-435 are enriched in polar residues; the sequence is LTSSAPSWPSLVDTTKQ. The sufficient for interaction with CPSF1 and CSTF3 stretch occupies residues 428 to 581; sequence SLVDTTKQWD…QESTEAAPAE (154 aa). Residues 439–479 show a composition bias toward basic and acidic residues; it reads YARREKDRDRDRERDRDRERERDRDRERERTRERERERDHS. Positions 442–477 are arg/Asp/Glu-rich domain; sequence REKDRDRDRERDRDRERERDRDRERERTRERERERD. Residues 478-535 are sufficient for interaction with AHCYL1; the sequence is HSPTPSVFNSDEERYRYREYAERGYERHRASREKEERHRERRHREKEETRHKSSRSNS. Residue Ser479 is modified to Phosphoserine. Position 481 is a phosphothreonine (Thr481). Phosphoserine occurs at positions 483 and 487. Residues 488 to 515 show a composition bias toward basic and acidic residues; that stretch reads DEERYRYREYAERGYERHRASREKEERH. A compositionally biased stretch (basic residues) spans 529-538; the sequence is KSSRSNSRRR. Ser541 carries the post-translational modification Phosphoserine. The span at 547–557 shows a compositional bias: basic residues; the sequence is HRRHKHKKSKR.

This sequence belongs to the FIP1 family. In terms of assembly, component of the cleavage and polyadenylation specificity factor (CPSF) complex, composed of CPSF1, CPSF2, CPSF3, CPSF4 and FIP1L1. Found in a complex with CPSF1, FIP1L1 and PAPOLA. Interacts with CPSF1, CPSF4, CSTF2 and CSTF3. Interacts with AHCYL1 (when phosphorylated); the interaction is direct and associates AHCYL1 with the CPSF complex and RNA. Interacts with PAPOLA; the interaction seems to be increased by the interaction with AHCYL1. Interacts with NUDT21/CPSF5; this interaction occurs in a RNA sequence-specific manner. Interacts (preferentially via unphosphorylated form and Arg/Glu/Asp-rich domain) with CPSF6 (via Arg/Ser-rich domain); this interaction mediates, at least in part, the interaction between the CFIm and CPSF complexes and may be inhibited by CPSF6 hyper-phosphorylation. Interacts (preferentially via unphosphorylated form and Arg/Asp/Glu-rich domain) with CPSF7 (via Arg/Ser-rich domain); this interaction mediates, at least in part, the interaction between the CFIm and CPSF complexes and may be inhibited by CPSF7 hyper-phosphorylation.

The protein localises to the nucleus. Functionally, component of the cleavage and polyadenylation specificity factor (CPSF) complex that plays a key role in pre-mRNA 3'-end formation, recognizing the AAUAAA signal sequence and interacting with poly(A) polymerase and other factors to bring about cleavage and poly(A) addition. FIP1L1 contributes to poly(A) site recognition and stimulates poly(A) addition. Binds to U-rich RNA sequence elements surrounding the poly(A) site. May act to tether poly(A) polymerase to the CPSF complex. This is Pre-mRNA 3'-end-processing factor FIP1 (Fip1l1) from Mus musculus (Mouse).